Reading from the N-terminus, the 85-residue chain is Elicitor peptide 7 (85 aa).

Residues 1 to 62 (MEGEGRREDG…TEVVNIPRSV (62 aa)) constitute a propeptide that is removed on maturation. Residues 66–85 (NVAARKGKQQTSSGKGGGTN) are disordered.

It belongs to the brassicaceae elicitor peptide family.

Elicitor of plant defense. The protein is Elicitor peptide 7 (PEP7) of Arabidopsis thaliana (Mouse-ear cress).